The following is a 283-amino-acid chain: Non-selective voltage-gated ion channel VDAC3 (283 aa).

Cys2 carries the N-acetylcysteine modification. A Phosphothreonine modification is found at Thr4. N6-acetyllysine occurs at positions 12, 15, and 20. Beta stranded transmembrane passes span 26–35 (MVKIDLRTKS) and 39–47 (VEFSTSGHA). A Glycyl lysine isopeptide (Lys-Gly) (interchain with G-Cter in ubiquitin) cross-link involves residue Lys53. 3 beta stranded membrane-spanning segments follow: residues 54 to 64 (ASGNLETKYKI), 69 to 76 (LTFTQKWN), and 80 to 89 (TLGTEISWEN). Lys90 bears the N6-acetyllysine mark. A beta stranded transmembrane segment spans residues 95–104 (LKLTLDTIFV). Residues Lys109 and Lys110 each participate in a glycyl lysine isopeptide (Lys-Gly) (interchain with G-Cter in ubiquitin) cross-link. The next 10 membrane-spanning stretches (beta stranded) occupy residues 111-120 (SGKLKASYKR), 123-130 (FSLGSNVD), 137-145 (TIYGWAVLA), 150-158 (LAGYQMSFD), 163-175 (KLSQ…GYKA), 178-185 (FQLHTHVN), 189-198 (EFGGSIYQKV), 202-211 (IETSINLAWT), 218-227 (RFGIAAKYKL), and 231-238 (TSLSAKVN). Ser241 bears the Phosphoserine mark. Residues 242-244 (LIG) and 260-264 (SALID) each bind NAD(+). The next 2 beta stranded transmembrane spans lie at 242–251 (LIGLGYTQTL) and 254–263 (GVKLTLSALI). Lys266 carries the post-translational modification N6-acetyllysine; alternate. Residue Lys266 forms a Glycyl lysine isopeptide (Lys-Gly) (interchain with G-Cter in ubiquitin); alternate linkage. The beta stranded transmembrane segment at 273 to 282 (HKVGLGFELE) threads the bilayer.

Belongs to the eukaryotic mitochondrial porin family. In terms of assembly, interacts with ARMC12 in a TBC1D21-dependent manner. Interacts with MISFA. Post-translationally, ubiquitinated by PRKN during mitophagy, leading to its degradation and enhancement of mitophagy. Deubiquitinated by USP30.

Its subcellular location is the mitochondrion outer membrane. It localises to the membrane. The catalysed reaction is chloride(in) = chloride(out). It carries out the reaction K(+)(in) = K(+)(out). Non-selective voltage-gated ion channel that mediates the transport of anions and cations through the mitochondrion outer membrane and plasma membrane. Forms a high-conducting channel with a stable open state and a voltage-induced closure with a mild preference for anions over cations. Involved in male fertility and sperm mitochondrial sheath formation. This Bos taurus (Bovine) protein is Non-selective voltage-gated ion channel VDAC3.